A 238-amino-acid polypeptide reads, in one-letter code: Lactate utilization protein A (238 aa).

The protein belongs to the LutA/YkgE family.

In terms of biological role, is involved in L-lactate degradation and allows cells to grow with lactate as the sole carbon source. This is Lactate utilization protein A from Geobacillus sp. (strain WCH70).